Reading from the N-terminus, the 159-residue chain is Elicitor-responsive protein 1 (159 aa).

The C2 domain maps to 1 to 112 (MAGSGVLEVH…SLGMEHGTWE (112 aa)). Ca(2+) contacts are provided by Asp21 and Asp30. Ser44 is modified (phosphoserine; by CPK). Asp81, Asp83, Ser86, and Asp89 together coordinate Ca(2+).

Ca(2+) is required as a cofactor. In terms of processing, phosphorylated at Ser-44 by CPK18 in a calcium-dependent manner. In terms of tissue distribution, isoform 2 is expressed in young vascular tissues and tiller buds.

Its subcellular location is the cytoplasm. The protein resides in the cell membrane. In terms of biological role, may play a role in plant defense signaling. Isoform 2 binds to phospholipids in a Ca(2+)-dependent manner in response to pathogen elicitors. This is Elicitor-responsive protein 1 (ERG1) from Oryza sativa subsp. japonica (Rice).